A 270-amino-acid chain; its full sequence is Karrikin insensitive 2 receptor CA (270 aa).

Serine 95 acts as the Nucleophile in catalysis. Residues aspartate 217 and histidine 246 contribute to the active site.

This sequence belongs to the AB hydrolase superfamily. Expressed in stigma.

It is found in the nucleus. Its subcellular location is the cytoplasm. Hydrolase which may be involved in plant olfaction during volatile communication. This Petunia hybrida (Petunia) protein is Karrikin insensitive 2 receptor CA.